Consider the following 396-residue polypeptide: Elongation factor Tu 1 (396 aa).

One can recognise a tr-type G domain in the interval 10-206; that stretch reads KPHCNVGTIG…AVDDYIPQPE (197 aa). Residues 19-26 are G1; the sequence is GHVDHGKT. Residue 19–26 coordinates GTP; that stretch reads GHVDHGKT. Threonine 26 provides a ligand contact to Mg(2+). Residues 60 to 64 are G2; that stretch reads GITIS. A G3 region spans residues 81–84; the sequence is DCPG. GTP is bound by residues 81–85 and 136–139; these read DCPGH and NKCD. Residues 136-139 form a G4 region; sequence NKCD. Positions 174 to 176 are G5; that stretch reads SAL.

This sequence belongs to the TRAFAC class translation factor GTPase superfamily. Classic translation factor GTPase family. EF-Tu/EF-1A subfamily. As to quaternary structure, monomer.

It is found in the cytoplasm. The catalysed reaction is GTP + H2O = GDP + phosphate + H(+). In terms of biological role, GTP hydrolase that promotes the GTP-dependent binding of aminoacyl-tRNA to the A-site of ribosomes during protein biosynthesis. The chain is Elongation factor Tu 1 from Rhodospirillum rubrum (strain ATCC 11170 / ATH 1.1.1 / DSM 467 / LMG 4362 / NCIMB 8255 / S1).